Consider the following 336-residue polypeptide: tRNA N6-adenosine threonylcarbamoyltransferase (336 aa).

The Fe cation site is built by His-114 and His-118. Substrate contacts are provided by residues 136–140, Asp-169, Gly-182, Asp-186, and Asn-275; that span reads LVSGG. Position 301 (Asp-301) interacts with Fe cation.

Belongs to the KAE1 / TsaD family. The cofactor is Fe(2+).

The protein localises to the cytoplasm. The enzyme catalyses L-threonylcarbamoyladenylate + adenosine(37) in tRNA = N(6)-L-threonylcarbamoyladenosine(37) in tRNA + AMP + H(+). Required for the formation of a threonylcarbamoyl group on adenosine at position 37 (t(6)A37) in tRNAs that read codons beginning with adenine. Is involved in the transfer of the threonylcarbamoyl moiety of threonylcarbamoyl-AMP (TC-AMP) to the N6 group of A37, together with TsaE and TsaB. TsaD likely plays a direct catalytic role in this reaction. In Streptococcus pneumoniae serotype 4 (strain ATCC BAA-334 / TIGR4), this protein is tRNA N6-adenosine threonylcarbamoyltransferase.